We begin with the raw amino-acid sequence, 314 residues long: Cytochrome f (314 aa).

The N-terminal stretch at 1 to 30 (MATNKFFKSLLFTLTIAISSFGFCVENSSA) is a signal peptide. Heme contacts are provided by Tyr31, Cys51, Cys54, and His55. Residues 280–300 (ILGYLAFCFCLLLTQVLLVLK) form a helical membrane-spanning segment.

The protein belongs to the cytochrome f family. As to quaternary structure, the 4 large subunits of the cytochrome b6-f complex are cytochrome b6, subunit IV (17 kDa polypeptide, petD), cytochrome f and the Rieske protein, while the 4 small subunits are PetG, PetL, PetM and PetN. The complex functions as a dimer. Heme is required as a cofactor.

Its subcellular location is the plastid. It localises to the chloroplast thylakoid membrane. Component of the cytochrome b6-f complex, which mediates electron transfer between photosystem II (PSII) and photosystem I (PSI), cyclic electron flow around PSI, and state transitions. This Thalassiosira pseudonana (Marine diatom) protein is Cytochrome f.